Reading from the N-terminus, the 194-residue chain is Histone H1.0 (194 aa).

N-acetylmethionine is present on M1. The interval 1 to 26 (MTENSTSTPAAKPKRAKAAKKSTDHP) is disordered. Position 2 is an N-acetylthreonine; in Histone H1.0, N-terminally processed (T2). Residues 24–97 (DHPKYSDMIV…GASGSFRLAK (74 aa)) enclose the H15 domain. R42 carries the citrulline modification. The tract at residues 86 to 194 (GVGASGSFRL…SSAKRASKKK (109 aa)) is disordered. ADP-ribosylserine is present on S104. The segment covering 105–194 (VAFKKTKKEV…SSAKRASKKK (90 aa)) has biased composition (basic residues).

The protein belongs to the histone H1/H5 family. Post-translationally, ADP-ribosylated on Ser-104 in response to DNA damage.

Its subcellular location is the nucleus. It localises to the chromosome. In terms of biological role, histones H1 are necessary for the condensation of nucleosome chains into higher-order structures. The histones H1.0 are found in cells that are in terminal stages of differentiation or that have low rates of cell division. The protein is Histone H1.0 (H1-0) of Rattus norvegicus (Rat).